The following is a 382-amino-acid chain: Galactokinase (382 aa).

Residue Glu34–Asp37 coordinates substrate. Residue Gly124–Ser130 coordinates ATP. Residues Ser130 and Glu162 each coordinate Mg(2+). The active-site Proton acceptor is the Asp174. Residue Tyr223 coordinates substrate.

This sequence belongs to the GHMP kinase family. GalK subfamily.

Its subcellular location is the cytoplasm. The catalysed reaction is alpha-D-galactose + ATP = alpha-D-galactose 1-phosphate + ADP + H(+). The protein operates within carbohydrate metabolism; galactose metabolism. Its function is as follows. Catalyzes the transfer of the gamma-phosphate of ATP to D-galactose to form alpha-D-galactose-1-phosphate (Gal-1-P). The sequence is that of Galactokinase from Escherichia coli (strain SMS-3-5 / SECEC).